The following is a 457-amino-acid chain: ATP synthase subunit beta (457 aa).

147–154 serves as a coordination point for ATP; sequence GGAGVGKT.

It belongs to the ATPase alpha/beta chains family. F-type ATPases have 2 components, CF(1) - the catalytic core - and CF(0) - the membrane proton channel. CF(1) has five subunits: alpha(3), beta(3), gamma(1), delta(1), epsilon(1). CF(0) has three main subunits: a(1), b(2) and c(9-12). The alpha and beta chains form an alternating ring which encloses part of the gamma chain. CF(1) is attached to CF(0) by a central stalk formed by the gamma and epsilon chains, while a peripheral stalk is formed by the delta and b chains.

It is found in the cell inner membrane. The catalysed reaction is ATP + H2O + 4 H(+)(in) = ADP + phosphate + 5 H(+)(out). In terms of biological role, produces ATP from ADP in the presence of a proton gradient across the membrane. The catalytic sites are hosted primarily by the beta subunits. This chain is ATP synthase subunit beta, found in Haemophilus ducreyi (strain 35000HP / ATCC 700724).